Here is a 186-residue protein sequence, read N- to C-terminus: MILLLTGMPGSGKGVVAREFEKRGIPVVSMGDAIREEAEKRGIPKTPEGLKEVSLKVREELGPGAVAILTVPKVRKLLELNPVVVVEGVRSPYEVEEFRKEFKNEEIKVVAIHSSPKSRFQRLLKRQRSDDPKTWEEFVERDRKELNFGIGEVIALADYIIVNECGFDQLKANIEKLISMIFDGKI.

7 to 14 (GMPGSGKG) contributes to the ATP binding site.

The protein belongs to the UPF0200 family.

The protein is UPF0200 protein PF1294 of Pyrococcus furiosus (strain ATCC 43587 / DSM 3638 / JCM 8422 / Vc1).